A 46-amino-acid polypeptide reads, in one-letter code: Cystatin WCPI-3 (46 aa).

The short motif at 35 to 38 (VVAG) is the Secondary area of contact element.

The protein belongs to the cystatin family. Phytocystatin subfamily.

Functionally, inhibitor of papain. The polypeptide is Cystatin WCPI-3 (Wisteria floribunda (Japanese wisteria)).